The sequence spans 724 residues: Protein BCH1 (724 aa).

Over residues 51 to 65 the composition is skewed to low complexity; it reads TTATASANDNGATSN. The tract at residues 51 to 71 is disordered; that stretch reads TTATASANDNGATSNINGQDP. The interval 711–724 is CHS5-binding; it reads LNFLKNFTNDTFDN.

This sequence belongs to the CHAPS family. In terms of assembly, component of the CHS5/6 complex composed of the 4 CHAPS proteins BCH1, BCH2, BUD7, and CHS6 as well as at least CHS5 and GTP-bound ARF1. The complex interacts with the cargo protein CHS3.

The protein localises to the golgi apparatus. It is found in the trans-Golgi network membrane. Its function is as follows. Member of the CHS5-ARF1P-binding proteins (CHAPS) which mediates export of specific cargo proteins, including chitin synthase CHS3. This is Protein BCH1 (BCH1) from Saccharomyces cerevisiae (strain ATCC 204508 / S288c) (Baker's yeast).